Reading from the N-terminus, the 232-residue chain is Protein FAM246B (232 aa).

The segment covering 19 to 31 has biased composition (basic and acidic residues); the sequence is EVLRRVTGRRRDP. 4 disordered regions span residues 19 to 47, 80 to 101, 151 to 179, and 191 to 232; these read EVLRRVTGRRRDPGPQSNGPGREDARAPG, AAGAGERTGAHSRGSVCSVCGE, ALLPPPPPSPPARREPRAVPRAAPRGPTL, and AASR…GGGD. A compositionally biased stretch (basic residues) spans 211-220; the sequence is APARKNHKKM.

Belongs to the FAM246 family.

The protein is Protein FAM246B of Homo sapiens (Human).